A 72-amino-acid polypeptide reads, in one-letter code: Movement protein TGBp3 (72 aa).

Topologically, residues 1–2 (MS) are lumenal. The chain crosses the membrane as a helical span at residues 3–23 (LSFSLIVFAVGVAVSIGVLTL). The Cytoplasmic segment spans residues 24 to 72 (TTQQSSSYCLILVDGAKAVVEGCHLRQDIPAILSELKPASSPFNPLFCS).

Belongs to the Tymovirales TGBp3 protein family.

The protein localises to the host endoplasmic reticulum membrane. In terms of biological role, plays a role in viral cell-to-cell propagation, by facilitating genome transport to neighboring plant cells through plasmosdesmata. May induce the formation of granular vesicles derived from the Endoplasmic reticulum, which align on actin filaments. The protein is Movement protein TGBp3 (ORF4) of Lolium latent virus (isolate Lolium/USA/US1/-) (LoLV).